The following is a 247-amino-acid chain: Chymase (247 aa).

The first 19 residues, 1 to 19 (MLLLPLPLLLFFLCSRAEA), serve as a signal peptide directing secretion. Residues 20–21 (GE) constitute a propeptide, activation peptide. A Peptidase S1 domain is found at 22-245 (IIGGTECKPH…YRPWINKILQ (224 aa)). Cysteines 51 and 67 form a disulfide. The active-site Charge relay system is the His-66. N-linked (GlcNAc...) asparagine glycosylation is found at Asn-80 and Asn-103. The active-site Charge relay system is the Asp-110. Cystine bridges form between Cys-144/Cys-209 and Cys-175/Cys-188. Catalysis depends on Ser-203, which acts as the Charge relay system.

Belongs to the peptidase S1 family. Granzyme subfamily.

It localises to the secreted. It is found in the cytoplasmic granule. It catalyses the reaction Preferential cleavage: Phe-|-Xaa &gt; Tyr-|-Xaa &gt; Trp-|-Xaa &gt; Leu-|-Xaa.. Functionally, major secreted protease of mast cells with suspected roles in vasoactive peptide generation, extracellular matrix degradation, and regulation of gland secretion. The chain is Chymase (CMA1) from Macaca fascicularis (Crab-eating macaque).